Here is a 183-residue protein sequence, read N- to C-terminus: Archaemetzincin (183 aa).

H131 lines the Zn(2+) pocket. Residue E132 is the Proton acceptor of the active site. Zn(2+)-binding residues include H135, H141, C142, C147, C166, and C169.

It belongs to the peptidase M54 family. Monomer. Zn(2+) is required as a cofactor.

Its function is as follows. Probable zinc metalloprotease whose natural substrate is unknown. In Saccharolobus islandicus (strain L.S.2.15 / Lassen #1) (Sulfolobus islandicus), this protein is Archaemetzincin.